The sequence spans 583 residues: Long-chain-fatty-acid--AMP ligase FadD26 (583 aa).

It belongs to the ATP-dependent AMP-binding enzyme family.

It catalyses the reaction holo-[(phenol)carboxyphthiodiolenone synthase] + a long-chain fatty acid + ATP = a long-chain fatty acyl-[(phenol)carboxyphthiodiolenone synthase] + AMP + diphosphate. The catalysed reaction is eicosanoate + holo-[(phenol)carboxyphthiodiolenone synthase] + ATP = icosanoyl-[(phenol)carboxyphthiodiolenone synthase] + AMP + diphosphate. It carries out the reaction holo-[(phenol)carboxyphthiodiolenone synthase] + docosanoate + ATP = docosanoyl-[(phenol)carboxyphthiodiolenone synthase] + AMP + diphosphate. It functions in the pathway lipid metabolism; fatty acid biosynthesis. Functionally, catalyzes the activation of long-chain fatty acids as acyl-adenylates (acyl-AMP), which are then transferred to the multifunctional polyketide synthase PpsA for further chain extension. Catalyzes the adenylation of the long-chain fatty acids eicosanoate (C20) or docosanoate (C22), and potentially the very-long-chain fatty acid lignocerate (C24). Involved in the biosynthesis of phthiocerol dimycocerosate (DIM A) and phthiodiolone dimycocerosate (DIM B). The chain is Long-chain-fatty-acid--AMP ligase FadD26 (fadD26) from Mycobacterium tuberculosis (strain CDC 1551 / Oshkosh).